The chain runs to 126 residues: UPF0738 protein BH2850 (126 aa).

It belongs to the UPF0738 family.

This is UPF0738 protein BH2850 from Halalkalibacterium halodurans (strain ATCC BAA-125 / DSM 18197 / FERM 7344 / JCM 9153 / C-125) (Bacillus halodurans).